We begin with the raw amino-acid sequence, 268 residues long: MTDSTTLVALVLGLLEGLTEFIPVSSTGHLLLAGHFLGFESAGRSFEVVIQLGAVLAVLTVYASKLISVIRAAPRDPQAARFLAAVLLAFLPAVVVGVMAHGFIKTVLFETPILIAIMLILGGIILLFVDRMAPAPRYNDVTEVPLGVALKIGFFQCLAMVPGVSRSGATIVGALLLGTGKRAAAEFSFFLSMPTMAGAFAFDLYKNRDVLDAGALGEIAVGFVAAFLAAVLVVRWLLGYVSRHGYSLFGWWRIIVGSIALAALLKGF.

The next 8 membrane-spanning stretches (helical) occupy residues 4-24 (STTLVALVLGLLEGLTEFIPV), 50-70 (IQLGAVLAVLTVYASKLISVI), 84-104 (AAVLLAFLPAVVVGVMAHGFI), 109-129 (FETPILIAIMLILGGIILLFV), 144-164 (VPLGVALKIGFFQCLAMVPGV), 184-204 (AAEFSFFLSMPTMAGAFAFDL), 214-234 (GALGEIAVGFVAAFLAAVLVV), and 245-265 (GYSLFGWWRIIVGSIALAALL).

It belongs to the UppP family.

It localises to the cell inner membrane. It carries out the reaction di-trans,octa-cis-undecaprenyl diphosphate + H2O = di-trans,octa-cis-undecaprenyl phosphate + phosphate + H(+). Functionally, catalyzes the dephosphorylation of undecaprenyl diphosphate (UPP). Confers resistance to bacitracin. This chain is Undecaprenyl-diphosphatase, found in Cereibacter sphaeroides (strain ATCC 17025 / ATH 2.4.3) (Rhodobacter sphaeroides).